Here is a 210-residue protein sequence, read N- to C-terminus: Tumor protein D53 homolog (210 aa).

Residues 22–73 (VTDVDFTSMISEEEKEELKAELAKLEDEISTLRQVLAAKEKHLIEIKQKLGM) are a coiled coil. Residues 185–197 (SSTAHASAQSSLA) are compositionally biased toward polar residues. Positions 185-210 (SSTAHASAQSSLAGTRLPESEEELQC) are disordered.

Belongs to the TPD52 family. As to quaternary structure, forms a homodimer or heterodimer with other members of the family.

The chain is Tumor protein D53 homolog (TPD52L1) from Gallus gallus (Chicken).